The primary structure comprises 940 residues: PTS system glucose-specific EIICBA component (940 aa).

A PTS EIIC type-1; first part domain is found at 1-284 (MQIKAQDTGQ…YAPLWYTSAG (284 aa)). 5 helical membrane-spanning segments follow: residues 43–63 (LMIPIAVLPIAGIFLGVGDAI), 83–103 (GGDVVFANLPILFAIAIAITF), 112–132 (FSAFVFWAAMNGFMSSLILPF), 175–195 (VFGGIIVGALTSVLYKKFYAI), and 209–229 (FVPIICFVVAIPVALILLMIW). The segment at 285-478 (GSLQEIVNQQ…VNSFRVAVES (194 aa)) is unknown. A PTS EIIC type-1; second part domain is found at 479–630 (LNPAQYSQGK…FNLATPGRGG (152 aa)). The next 5 membrane-spanning stretches (helical) occupy residues 487–507 (GKFPFMLFGIPAAGVAMILAA), 515–535 (AASIVGSAAFTSFLTGITEPF), 537–557 (FTFLFLAPWLFYGVHAVLAAV), 564–584 (ILGANVGQTFSGSFIDFILYG), and 598–618 (LVPIIGLFLAAIYFPTFYFLI). Positions 661 to 743 (QIEAGILLQA…QDIIQGKVNW (83 aa)) constitute a PTS EIIB type-1 domain. Cys683 serves as the catalytic Phosphocysteine intermediate; for EIIB activity. In terms of domain architecture, PTS EIIA type-1 spans 794-907 (DETFKQKLVG…NPITPFVVMK (114 aa)). His847 functions as the Tele-phosphohistidine intermediate; for EIIA activity in the catalytic mechanism.

The protein resides in the cell membrane. It carries out the reaction N(pros)-phospho-L-histidyl-[protein] + D-glucose(out) = D-glucose 6-phosphate(in) + L-histidyl-[protein]. Its function is as follows. The phosphoenolpyruvate-dependent sugar phosphotransferase system (sugar PTS), a major carbohydrate active transport system, catalyzes the phosphorylation of incoming sugar substrates concomitantly with their translocation across the cell membrane. This system is involved in glucose transport. This chain is PTS system glucose-specific EIICBA component (ptsG), found in Mycoplasma pneumoniae (strain ATCC 29342 / M129 / Subtype 1) (Mycoplasmoides pneumoniae).